A 380-amino-acid chain; its full sequence is Alcohol dehydrogenase 3 (380 aa).

Residues C48, T50, H70, C100, C103, C106, C114, and C178 each coordinate Zn(2+). 2 residues coordinate an alcohol: T50 and H70. T50 serves as a coordination point for NAD(+). NAD(+) contacts are provided by residues 203 to 208 (GLGAVG), D227, R232, T273, V296, 296 to 298 (VGV), F323, and R373.

This sequence belongs to the zinc-containing alcohol dehydrogenase family. Homodimer. Homotetramer. It depends on Zn(2+) as a cofactor.

It is found in the cytoplasm. It carries out the reaction a primary alcohol + NAD(+) = an aldehyde + NADH + H(+). The catalysed reaction is a secondary alcohol + NAD(+) = a ketone + NADH + H(+). The chain is Alcohol dehydrogenase 3 (ADH3) from Solanum tuberosum (Potato).